Here is a 202-residue protein sequence, read N- to C-terminus: Imidazoleglycerol-phosphate dehydratase (202 aa).

This sequence belongs to the imidazoleglycerol-phosphate dehydratase family.

The protein resides in the cytoplasm. The catalysed reaction is D-erythro-1-(imidazol-4-yl)glycerol 3-phosphate = 3-(imidazol-4-yl)-2-oxopropyl phosphate + H2O. It participates in amino-acid biosynthesis; L-histidine biosynthesis; L-histidine from 5-phospho-alpha-D-ribose 1-diphosphate: step 6/9. This Mycolicibacterium gilvum (strain PYR-GCK) (Mycobacterium gilvum (strain PYR-GCK)) protein is Imidazoleglycerol-phosphate dehydratase.